A 224-amino-acid polypeptide reads, in one-letter code: Beta-casein (224 aa).

A signal peptide spans 1 to 15 (MKVLILACLVALALA). Phosphoserine occurs at positions 30, 32, 33, and 34.

Belongs to the beta-casein family. In terms of tissue distribution, mammary gland specific. Secreted in milk.

It localises to the secreted. In terms of biological role, important role in determination of the surface properties of the casein micelles. This chain is Beta-casein (CSN2), found in Bubalus bubalis (Domestic water buffalo).